The primary structure comprises 69 residues: Large ribosomal subunit protein uL29 (69 aa).

Belongs to the universal ribosomal protein uL29 family.

In Synechococcus sp. (strain WH7803), this protein is Large ribosomal subunit protein uL29.